The chain runs to 320 residues: Polyadenylate-binding protein-interacting protein 13 (320 aa).

Residues 1–44 form a disordered region; sequence MAVAENVGVKVDSSNNQNIDNNTTSLVETKPSCSDDQTPKSKSS. Over residues 12 to 44 the composition is skewed to polar residues; that stretch reads DSSNNQNIDNNTTSLVETKPSCSDDQTPKSKSS. A PAM2-like motif is present at residues 65–75; that stretch reads HLNPMAKEFVP. RRM domains are found at residues 137-212 and 234-310; these read RTVY…MSKT and KTVY…PSKT.

This chain is Polyadenylate-binding protein-interacting protein 13 (CID13), found in Arabidopsis thaliana (Mouse-ear cress).